Consider the following 93-residue polypeptide: Small ribosomal subunit protein bS20 (93 aa).

Belongs to the bacterial ribosomal protein bS20 family.

Binds directly to 16S ribosomal RNA. This is Small ribosomal subunit protein bS20 from Dictyoglomus thermophilum (strain ATCC 35947 / DSM 3960 / H-6-12).